A 167-amino-acid polypeptide reads, in one-letter code: Peptide deformylase (167 aa).

Residues Cys91 and His133 each coordinate Fe cation. Residue Glu134 is part of the active site. His137 contacts Fe cation.

The protein belongs to the polypeptide deformylase family. Fe(2+) serves as cofactor.

The enzyme catalyses N-terminal N-formyl-L-methionyl-[peptide] + H2O = N-terminal L-methionyl-[peptide] + formate. Its function is as follows. Removes the formyl group from the N-terminal Met of newly synthesized proteins. Requires at least a dipeptide for an efficient rate of reaction. N-terminal L-methionine is a prerequisite for activity but the enzyme has broad specificity at other positions. The chain is Peptide deformylase from Nitrosococcus oceani (strain ATCC 19707 / BCRC 17464 / JCM 30415 / NCIMB 11848 / C-107).